A 652-amino-acid polypeptide reads, in one-letter code: DNA mismatch repair protein MutL (652 aa).

Disordered stretches follow at residues L357–S377 and P425–D457. Positions S365–Y375 are enriched in polar residues.

This sequence belongs to the DNA mismatch repair MutL/HexB family.

This protein is involved in the repair of mismatches in DNA. It is required for dam-dependent methyl-directed DNA mismatch repair. May act as a 'molecular matchmaker', a protein that promotes the formation of a stable complex between two or more DNA-binding proteins in an ATP-dependent manner without itself being part of a final effector complex. This chain is DNA mismatch repair protein MutL, found in Colwellia psychrerythraea (strain 34H / ATCC BAA-681) (Vibrio psychroerythus).